A 313-amino-acid chain; its full sequence is Ribosomal RNA small subunit methyltransferase H (313 aa).

S-adenosyl-L-methionine is bound by residues 35–37 (GGH), aspartate 55, phenylalanine 79, aspartate 101, and glutamine 108.

This sequence belongs to the methyltransferase superfamily. RsmH family.

It localises to the cytoplasm. The enzyme catalyses cytidine(1402) in 16S rRNA + S-adenosyl-L-methionine = N(4)-methylcytidine(1402) in 16S rRNA + S-adenosyl-L-homocysteine + H(+). Specifically methylates the N4 position of cytidine in position 1402 (C1402) of 16S rRNA. In Shigella flexneri, this protein is Ribosomal RNA small subunit methyltransferase H.